A 103-amino-acid polypeptide reads, in one-letter code: MYAVFQSGGKQHRVEAGHTVRLEKLEVATGETIEFDQVLLVADGETVHVGAPLVEGGKVVAEVVSHGRAEKVTIVKFRRRKHHDKKMGHRQWFTEVKITAISA.

The protein belongs to the bacterial ribosomal protein bL21 family. In terms of assembly, part of the 50S ribosomal subunit. Contacts protein L20.

In terms of biological role, this protein binds to 23S rRNA in the presence of protein L20. The sequence is that of Large ribosomal subunit protein bL21 from Shewanella piezotolerans (strain WP3 / JCM 13877).